The chain runs to 216 residues: Histidine biosynthesis bifunctional protein HisIE (216 aa).

Positions 1–127 are phosphoribosyl-AMP cyclohydrolase; the sequence is MSFIDSLSPQ…GKIVAPPGDT (127 aa). A phosphoribosyl-ATP pyrophosphohydrolase region spans residues 128 to 216; that stretch reads LSQVFQVICD…VYRKLQERRR (89 aa).

This sequence in the N-terminal section; belongs to the PRA-CH family. It in the C-terminal section; belongs to the PRA-PH family.

It localises to the cytoplasm. It carries out the reaction 1-(5-phospho-beta-D-ribosyl)-ATP + H2O = 1-(5-phospho-beta-D-ribosyl)-5'-AMP + diphosphate + H(+). It catalyses the reaction 1-(5-phospho-beta-D-ribosyl)-5'-AMP + H2O = 1-(5-phospho-beta-D-ribosyl)-5-[(5-phospho-beta-D-ribosylamino)methylideneamino]imidazole-4-carboxamide. The protein operates within amino-acid biosynthesis; L-histidine biosynthesis; L-histidine from 5-phospho-alpha-D-ribose 1-diphosphate: step 2/9. It participates in amino-acid biosynthesis; L-histidine biosynthesis; L-histidine from 5-phospho-alpha-D-ribose 1-diphosphate: step 3/9. This Nostoc sp. (strain PCC 7120 / SAG 25.82 / UTEX 2576) protein is Histidine biosynthesis bifunctional protein HisIE (hisI).